The following is a 573-amino-acid chain: Urease subunit alpha 2 (573 aa).

The 439-residue stretch at 135-573 (GGMDTHVHYI…ISLNQLYFFS (439 aa)) folds into the Urease domain. Residues His140, His142, and Lys223 each contribute to the Ni(2+) site. Position 223 is an N6-carboxylysine (Lys223). His225 is a binding site for substrate. Residues His252 and His278 each contribute to the Ni(2+) site. The active-site Proton donor is His326. Asp366 serves as a coordination point for Ni(2+).

Belongs to the metallo-dependent hydrolases superfamily. Urease alpha subunit family. In terms of assembly, heterotrimer of UreA (gamma), UreB (beta) and UreC (alpha) subunits. Three heterotrimers associate to form the active enzyme. The cofactor is Ni cation. In terms of processing, carboxylation allows a single lysine to coordinate two nickel ions.

The protein resides in the cytoplasm. The catalysed reaction is urea + 2 H2O + H(+) = hydrogencarbonate + 2 NH4(+). It functions in the pathway nitrogen metabolism; urea degradation; CO(2) and NH(3) from urea (urease route): step 1/1. Functionally, disrupting the ure2 operon has no effect on urease activity, or pathogen survival in BALB/c mice when inoculated by gavage, but confers slightly enhanced resistance to low pH killing in vitro. The polypeptide is Urease subunit alpha 2 (Brucella suis biovar 1 (strain 1330)).